The chain runs to 381 residues: Lipid-A-disaccharide synthase (381 aa).

It belongs to the LpxB family.

The enzyme catalyses a lipid X + a UDP-2-N,3-O-bis[(3R)-3-hydroxyacyl]-alpha-D-glucosamine = a lipid A disaccharide + UDP + H(+). It functions in the pathway bacterial outer membrane biogenesis; LPS lipid A biosynthesis. Its function is as follows. Condensation of UDP-2,3-diacylglucosamine and 2,3-diacylglucosamine-1-phosphate to form lipid A disaccharide, a precursor of lipid A, a phosphorylated glycolipid that anchors the lipopolysaccharide to the outer membrane of the cell. This Psychromonas ingrahamii (strain DSM 17664 / CCUG 51855 / 37) protein is Lipid-A-disaccharide synthase.